The sequence spans 704 residues: Elongation factor G (704 aa).

Residues 8–291 enclose the tr-type G domain; the sequence is DKVRNIGIMA…AVIDYLASPV (284 aa). GTP contacts are provided by residues 17–24, 90–94, and 144–147; these read AHIDAGKT, DTPGH, and NKMD.

This sequence belongs to the TRAFAC class translation factor GTPase superfamily. Classic translation factor GTPase family. EF-G/EF-2 subfamily.

It localises to the cytoplasm. Its function is as follows. Catalyzes the GTP-dependent ribosomal translocation step during translation elongation. During this step, the ribosome changes from the pre-translocational (PRE) to the post-translocational (POST) state as the newly formed A-site-bound peptidyl-tRNA and P-site-bound deacylated tRNA move to the P and E sites, respectively. Catalyzes the coordinated movement of the two tRNA molecules, the mRNA and conformational changes in the ribosome. The chain is Elongation factor G from Chlorobaculum parvum (strain DSM 263 / NCIMB 8327) (Chlorobium vibrioforme subsp. thiosulfatophilum).